The sequence spans 175 residues: Small ribosomal subunit protein uS5 (175 aa).

Positions 1–21 (MAKPERNKKPQQAEERDDGMR) are disordered. Residues 20–83 (MREKMVAVNR…EEARRKMAKV (64 aa)) form the S5 DRBM domain.

This sequence belongs to the universal ribosomal protein uS5 family. As to quaternary structure, part of the 30S ribosomal subunit. Contacts proteins S4 and S8.

Its function is as follows. With S4 and S12 plays an important role in translational accuracy. In terms of biological role, located at the back of the 30S subunit body where it stabilizes the conformation of the head with respect to the body. This chain is Small ribosomal subunit protein uS5, found in Dechloromonas aromatica (strain RCB).